We begin with the raw amino-acid sequence, 200 residues long: Prolactin (200 aa).

3 cysteine pairs are disulfide-bonded: Cys4/Cys11, Cys59/Cys175, and Cys192/Cys200.

The protein belongs to the somatotropin/prolactin family. In terms of tissue distribution, pituitary gland.

The protein localises to the secreted. The sequence is that of Prolactin (prl) from Protopterus aethiopicus (Marbled lungfish).